Consider the following 317-residue polypeptide: Aspartate carbamoyltransferase catalytic subunit (317 aa).

Carbamoyl phosphate contacts are provided by arginine 66 and threonine 67. An L-aspartate-binding site is contributed by lysine 94. The carbamoyl phosphate site is built by arginine 116, histidine 144, and glutamine 147. Residues arginine 177 and arginine 231 each coordinate L-aspartate. Carbamoyl phosphate contacts are provided by glycine 272 and proline 273.

Belongs to the aspartate/ornithine carbamoyltransferase superfamily. ATCase family. Heterododecamer (2C3:3R2) of six catalytic PyrB chains organized as two trimers (C3), and six regulatory PyrI chains organized as three dimers (R2).

It carries out the reaction carbamoyl phosphate + L-aspartate = N-carbamoyl-L-aspartate + phosphate + H(+). It functions in the pathway pyrimidine metabolism; UMP biosynthesis via de novo pathway; (S)-dihydroorotate from bicarbonate: step 2/3. In terms of biological role, catalyzes the condensation of carbamoyl phosphate and aspartate to form carbamoyl aspartate and inorganic phosphate, the committed step in the de novo pyrimidine nucleotide biosynthesis pathway. The polypeptide is Aspartate carbamoyltransferase catalytic subunit (Rhodopseudomonas palustris (strain BisB5)).